The primary structure comprises 49 residues: Large ribosomal subunit protein bL33 (49 aa).

Belongs to the bacterial ribosomal protein bL33 family.

This Streptococcus pyogenes serotype M18 (strain MGAS8232) protein is Large ribosomal subunit protein bL33.